A 168-amino-acid chain; its full sequence is uncharacterized protein (168 aa).

The next 2 helical transmembrane spans lie at 4 to 24 (IIAL…PEEE) and 94 to 114 (IMVG…GFAW).

It to A.aeolicus aq_1446.

Its subcellular location is the cell membrane. This is an uncharacterized protein from Aquifex aeolicus (strain VF5).